Here is a 326-residue protein sequence, read N- to C-terminus: Probable cell division protein WhiA (326 aa).

Residues 275–308 (SLEELGALADPPLTKDAIAGRIRRLLALADKRAR) constitute a DNA-binding region (H-T-H motif).

It belongs to the WhiA family.

Functionally, involved in cell division and chromosome segregation. The chain is Probable cell division protein WhiA from Salinispora tropica (strain ATCC BAA-916 / DSM 44818 / JCM 13857 / NBRC 105044 / CNB-440).